Reading from the N-terminus, the 1422-residue chain is DNA-directed RNA polymerase subunit beta (1422 aa).

A disordered region spans residues 1392 to 1422; the sequence is QAAREAAERDLGGGPLGAPRGAVASGEKSSA.

The protein belongs to the RNA polymerase beta chain family. As to quaternary structure, the RNAP catalytic core consists of 2 alpha, 1 beta, 1 beta' and 1 omega subunit. When a sigma factor is associated with the core the holoenzyme is formed, which can initiate transcription.

The catalysed reaction is RNA(n) + a ribonucleoside 5'-triphosphate = RNA(n+1) + diphosphate. Functionally, DNA-dependent RNA polymerase catalyzes the transcription of DNA into RNA using the four ribonucleoside triphosphates as substrates. This is DNA-directed RNA polymerase subunit beta from Anaeromyxobacter dehalogenans (strain 2CP-1 / ATCC BAA-258).